The primary structure comprises 245 residues: Complement C1q subcomponent subunit A (245 aa).

An N-terminal signal peptide occupies residues 1-22 (METSQGWLVACVLAVTLVWTVA). Positions 31–109 (GKDGVAGIPG…KGVKGNPGNI (79 aa)) constitute a Collagen-like domain. The segment at 35–111 (VAGIPGRPGR…VKGNPGNIRD (77 aa)) is disordered. P39 and P45 each carry 4-hydroxyproline. K48 carries the post-translational modification 5-hydroxylysine. An O-linked (Gal...) hydroxylysine glycan is attached at K48. P54 is modified (4-hydroxyproline). Position 67 is a 5-hydroxylysine (K67). K67 carries an O-linked (Gal...) hydroxylysine glycan. A 4-hydroxyproline mark is found at P79 and P85. K100 is subject to 5-hydroxylysine. K100 carries an O-linked (Gal...) hydroxylysine glycan. The 136-residue stretch at 110 to 245 (RDQPRPAFSA…FSGFLIFPSA (136 aa)) folds into the C1q domain. N-linked (GlcNAc...) asparagine glycosylation is present at N146. A disulfide bridge connects residues C172 and C190. Ca(2+) is bound at residue Q199.

Core component of the complement C1 complex, a calcium-dependent complex composed of 1 molecule of the C1Q subcomplex, 2 molecules of C1R and 2 molecules of C1S. The C1Q subcomplex is composed 18 subunits: 3 chains of C1QA, C1QB, and C1QC trimerize to form 6 collagen-like triple helices connected to six globular ligand-recognition modules (C1q domain). Interacts with CR1 (via Sushi 24 and Sushi 25 domains). Interacts (via C-terminus) with CD33; this interaction activates CD33 inhibitory motifs. O-linked glycans are assumed to be the Glc-Gal disaccharides typically found as secondary modifications of hydroxylated lysines in collagen-like domains.

Its subcellular location is the secreted. The protein localises to the cell surface. With respect to regulation, the C1Q subcomplex is inhibited by sulfated molecules, such as triterpenoid sulfates, heparan sulfate, or chondroitin sulfates. Its function is as follows. Core component of the complement C1 complex, a multiprotein complex that initiates the classical pathway of the complement system, a cascade of proteins that leads to phagocytosis and breakdown of pathogens and signaling that strengthens the adaptive immune system. The classical complement pathway is initiated by the C1Q subcomplex of the C1 complex, which specifically binds IgG or IgM immunoglobulins complexed with antigens, forming antigen-antibody complexes on the surface of pathogens: C1QA, together with C1QB and C1QC, specifically recognizes and binds the Fc regions of IgG or IgM via its C1q domain. Immunoglobulin-binding activates the proenzyme C1R, which cleaves C1S, initiating the proteolytic cascade of the complement system. The C1Q subcomplex is activated by a hexamer of IgG complexed with antigens, while it is activated by a pentameric IgM. The C1Q subcomplex also recognizes and binds phosphatidylserine exposed on the surface of cells undergoing programmed cell death, possibly promoting activation of the complement system. The sequence is that of Complement C1q subcomponent subunit A from Rattus norvegicus (Rat).